The following is a 393-amino-acid chain: NADH-quinone oxidoreductase subunit D (393 aa).

The protein belongs to the complex I 49 kDa subunit family. As to quaternary structure, NDH-1 is composed of 14 different subunits. Subunits NuoB, C, D, E, F, and G constitute the peripheral sector of the complex.

The protein resides in the cell inner membrane. It carries out the reaction a quinone + NADH + 5 H(+)(in) = a quinol + NAD(+) + 4 H(+)(out). In terms of biological role, NDH-1 shuttles electrons from NADH, via FMN and iron-sulfur (Fe-S) centers, to quinones in the respiratory chain. The immediate electron acceptor for the enzyme in this species is believed to be ubiquinone. Couples the redox reaction to proton translocation (for every two electrons transferred, four hydrogen ions are translocated across the cytoplasmic membrane), and thus conserves the redox energy in a proton gradient. This chain is NADH-quinone oxidoreductase subunit D, found in Ehrlichia ruminantium (strain Gardel).